The primary structure comprises 272 residues: uncharacterized protein (272 aa).

An N-terminal signal peptide occupies residues methionine 1–leucine 20.

This is an uncharacterized protein from Caenorhabditis elegans.